We begin with the raw amino-acid sequence, 394 residues long: Elongation factor Tu (394 aa).

The tr-type G domain occupies 10–204 (KPHVNVGTIG…ALDTYIPEPE (195 aa)). The interval 19–26 (GHVDHGKT) is G1. Residue 19–26 (GHVDHGKT) participates in GTP binding. Residue Thr-26 coordinates Mg(2+). The interval 60–64 (GITIN) is G2. The G3 stretch occupies residues 81 to 84 (DCPG). GTP is bound by residues 81-85 (DCPGH) and 136-139 (NKCD). Residues 136-139 (NKCD) form a G4 region. The interval 174–176 (SAL) is G5.

This sequence belongs to the TRAFAC class translation factor GTPase superfamily. Classic translation factor GTPase family. EF-Tu/EF-1A subfamily. In terms of assembly, monomer.

Its subcellular location is the cytoplasm. It catalyses the reaction GTP + H2O = GDP + phosphate + H(+). GTP hydrolase that promotes the GTP-dependent binding of aminoacyl-tRNA to the A-site of ribosomes during protein biosynthesis. The sequence is that of Elongation factor Tu from Shewanella pealeana (strain ATCC 700345 / ANG-SQ1).